A 105-amino-acid polypeptide reads, in one-letter code: Ketoisovalerate oxidoreductase subunit VorD (105 aa).

2 consecutive 4Fe-4S ferredoxin-type domains span residues 44–73 (FMPV…IKED) and 74–103 (GFVA…MVRE). [4Fe-4S] cluster is bound by residues C53, C56, C59, C63, C83, C86, C89, and C93.

In terms of assembly, heterotetramer of one alpha, one beta, one delta and one gamma chain. The cofactor is [4Fe-4S] cluster.

The catalysed reaction is 3-methyl-2-oxobutanoate + 2 oxidized [2Fe-2S]-[ferredoxin] + CoA = 2-methylpropanoyl-CoA + 2 reduced [2Fe-2S]-[ferredoxin] + CO2 + H(+). In Pyrococcus horikoshii (strain ATCC 700860 / DSM 12428 / JCM 9974 / NBRC 100139 / OT-3), this protein is Ketoisovalerate oxidoreductase subunit VorD (vorD).